The following is a 129-amino-acid chain: uncharacterized protein (129 aa).

The protein localises to the cytoplasm. It is found in the cytosol. The protein resides in the nucleus. This is an uncharacterized protein from Schizosaccharomyces pombe (strain 972 / ATCC 24843) (Fission yeast).